The chain runs to 279 residues: Glycerol uptake facilitator protein (279 aa).

Topologically, residues 1–8 (MTTAAPTP) are cytoplasmic. Residues 9–37 (SLFGQCLAEFLGTALLIFFGTGCVAALKV) traverse the membrane as a helical segment. Topologically, residues 38–42 (AGASF) are periplasmic. The helical transmembrane segment at 43–63 (GLWEISIIWGVGVSMAIYLSA) threads the bilayer. At 64–66 (GVS) the chain is on the cytoplasmic side. Residues 67–70 (GAHL) lie within the membrane without spanning it. The short motif at 71–73 (NPA) is the NPA 1 element. Residues 71 to 81 (NPAVSIALWLF) constitute an intramembrane region (helical). Residues 82–87 (AGFEGR) lie on the Cytoplasmic side of the membrane. The chain crosses the membrane as a helical span at residues 88–111 (KLPFYITAQVAGAFCAAALVYTLY). At 112–146 (SSLFIEFEQAQNIVRGSQDSLALASVFSTYPHPAL) the chain is on the periplasmic side. Residues 147-172 (SVGQAFLVEVVITAILMAVIMALTDD) traverse the membrane as a helical segment. Residues 173–180 (GNGLPRGP) are Cytoplasmic-facing. A helical membrane pass occupies residues 181 to 197 (LAPLLIGLLIAVIGSAM). At 198–201 (GPLT) the chain is on the periplasmic side. An intramembrane segment occupies 202 to 205 (GFAM). Residues 206 to 208 (NPA) carry the NPA 2 motif. Residues 206-219 (NPARDFGPKLMTYL) constitute an intramembrane region (helical). Residues 220-234 (AGWGPIAFTGGREIP) are Periplasmic-facing. A helical membrane pass occupies residues 235-257 (YFLVPIFAPILGACLGAGGYRVL). Residues 258–279 (IARHLPSAAAPAEAEPEKVRAS) are Cytoplasmic-facing.

Belongs to the MIP/aquaporin (TC 1.A.8) family.

The protein resides in the cell inner membrane. It carries out the reaction glycerol(in) = glycerol(out). Functionally, mediates glycerol diffusion across the cytoplasmic membrane via a pore-type mechanism. The protein is Glycerol uptake facilitator protein (glpF) of Pseudomonas aeruginosa (strain ATCC 15692 / DSM 22644 / CIP 104116 / JCM 14847 / LMG 12228 / 1C / PRS 101 / PAO1).